The chain runs to 397 residues: Acetate kinase (397 aa).

Asn7 contributes to the Mg(2+) binding site. ATP is bound at residue Lys14. Residue Arg91 coordinates substrate. Catalysis depends on Asp148, which acts as the Proton donor/acceptor. Residues 208–212 (HLGNG), 283–285 (DFR), and 331–335 (GLGEN) contribute to the ATP site. Residue Glu383 participates in Mg(2+) binding.

It belongs to the acetokinase family. As to quaternary structure, homodimer. Mg(2+) serves as cofactor. The cofactor is Mn(2+).

Its subcellular location is the cytoplasm. It carries out the reaction acetate + ATP = acetyl phosphate + ADP. It participates in metabolic intermediate biosynthesis; acetyl-CoA biosynthesis; acetyl-CoA from acetate: step 1/2. Catalyzes the formation of acetyl phosphate from acetate and ATP. Can also catalyze the reverse reaction. The polypeptide is Acetate kinase (Heliobacterium modesticaldum (strain ATCC 51547 / Ice1)).